We begin with the raw amino-acid sequence, 163 residues long: Large ribosomal subunit protein uL18 (163 aa).

This sequence belongs to the universal ribosomal protein uL18 family. In terms of assembly, part of the 50S ribosomal subunit. Contacts the 5S and 23S rRNAs.

Its function is as follows. This is one of the proteins that bind and probably mediate the attachment of the 5S RNA into the large ribosomal subunit, where it forms part of the central protuberance. This is Large ribosomal subunit protein uL18 from Thermoplasma acidophilum (strain ATCC 25905 / DSM 1728 / JCM 9062 / NBRC 15155 / AMRC-C165).